The following is a 476-amino-acid chain: Lipase (476 aa).

Positions 1-23 (MGIFDYKNLGTEGSKTLFADAMA) are cleaved as a signal peptide. Catalysis depends on Ser-207, which acts as the Charge relay system. 3 Hemolysin-type calcium-binding repeats span residues 372–389 (IGSDGNDLIQGGNGADFI), 390–407 (EGGKGNDTIRDNSGHNTF), and 410–427 (SGHFGNDRVIGYQPTDKL). Asp-437, Asp-440, and Asp-448 together coordinate Ca(2+).

This sequence belongs to the AB hydrolase superfamily. Lipase family.

The enzyme catalyses a triacylglycerol + H2O = a diacylglycerol + a fatty acid + H(+). This chain is Lipase, found in Pseudomonas fluorescens.